Reading from the N-terminus, the 38-residue chain is Esterase-5 (38 aa).

A disordered region spans residues 1–38 (SAAADPLIVELPNGKVRGRDNEGYYEAEGIPRAEPPVG).

This sequence belongs to the type-B carboxylesterase/lipase family.

It catalyses the reaction a carboxylic ester + H2O = an alcohol + a carboxylate + H(+). The polypeptide is Esterase-5 (Est-5) (Drosophila mojavensis (Fruit fly)).